The primary structure comprises 757 residues: Chloride anion exchanger (757 aa).

The Cytoplasmic segment spans residues 1 to 71 (MIEAIGNQYV…SWLPAYKIKE (71 aa)). The helical transmembrane segment at 72–92 (WLLSDIVSGISTGLVAVLQGL) threads the bilayer. A93 is a topological domain (extracellular). The helical transmembrane segment at 94–114 (FALLVNIPPAYGLYAAFFPVI) threads the bilayer. Topologically, residues 115–124 (TYFFLGTSRH) are cytoplasmic. Residues 125-145 (ISVGPFPVLSMMVGVVVTRVV) form a helical membrane-spanning segment. The Extracellular portion of the chain corresponds to 146-176 (SDPNASSELSSSSTENDSFIEEKVMVAASVT). 2 N-linked (GlcNAc...) asparagine glycosylation sites follow: N149 and N161. The chain crosses the membrane as a helical span at residues 177–197 (VLSGIIQLLLGVLQVGFVVIY). At 198-201 (LSES) the chain is on the cytoplasmic side. A helical membrane pass occupies residues 202–222 (LISGFTTAAAIHVLVSQLKFM). Residues 223-250 (LQLPVPAYSDPFSIFKVLESVFTQIQKT) are Extracellular-facing. The helical transmembrane segment at 251-271 (NIADLVTSVIILVVVFVFKEI) threads the bilayer. The Cytoplasmic portion of the chain corresponds to 272 to 278 (NQRYRSK). The helical transmembrane segment at 279-299 (LPVPIPIELIMTVIATGVSYG) threads the bilayer. Residues 300 to 335 (CNFEDRFGVAVVGNMSLGFQPPITPSVEVFQDTIGD) lie on the Extracellular side of the membrane. Residues 336–356 (SFGIAIVGFAVAFSVASVYSL) traverse the membrane as a helical segment. Over 357–367 (KYDYPIDGNQE) the chain is Cytoplasmic. A helical transmembrane segment spans residues 368-388 (LIALGVSNIFTGAFKGFAGST). The Extracellular portion of the chain corresponds to 389 to 404 (ALSRSGVQESTGGKTQ). Residues 405-425 (VAGLLSAVIVLIVIVAIGFLL) traverse the membrane as a helical segment. Residues 426-462 (QPLQKSVLAALALGNLKGMLMQFAEIGRLWKKDKYDC) lie on the Cytoplasmic side of the membrane. A helical membrane pass occupies residues 463–483 (LIWIMTFIFAIVLGLGLGLAA). The Extracellular portion of the chain corresponds to 484 to 757 (SVAFQLLTIV…ECQVPVETKF (274 aa)). Residues 518-713 (NYAEVYEPEG…LTIHDAILHI (196 aa)) enclose the STAS domain. A PDZ-binding motif is present at residues 754–757 (ETKF).

It belongs to the SLC26A/SulP transporter (TC 2.A.53) family. Interacts with PDZK1. Interacts with CFTR, SLC26A6 and NHERF1. Interacts (via PDZ-binding motif) with NHERF4 (via the third PDZ domain). This interaction leads to decreased expression of SLC26A3 on the cell membrane resulting in its reduced exchanger activity. N-glycosylation is required for efficient cell surface expression, and protection from proteolytic degradation. Expressed in spermatogenic cells. Expressed at high levels in cecum and colon and at lower levels in small intestine.

Its subcellular location is the apical cell membrane. The protein resides in the membrane. The protein localises to the cell membrane. It carries out the reaction hydrogencarbonate(in) + 2 chloride(out) = hydrogencarbonate(out) + 2 chloride(in). Its function is as follows. Mediates chloride-bicarbonate exchange with a chloride bicarbonate stoichiometry of 2:1 in the intestinal epithelia. Plays a role in the chloride and bicarbonate homeostasis during sperm epididymal maturation and capacitation. In Mus musculus (Mouse), this protein is Chloride anion exchanger (Slc26a3).